Here is a 189-residue protein sequence, read N- to C-terminus: MANYSTNDFKPGLKVMLDSNPCSIMENEYVKPGKGQAFNRVKLRNLKTGKVLEKTFKSGDTLEAADIVEVEMNYLYNDGEMWHFMDPESFEQIAADKTAMGDAAKWLKDDSNETCTIMLFNGVPLNVNAPNFVVLKVVETDPGVRGDTSGGGGKPAKLETGAVVRVPLFVQQEESVRVDTRTGEYLERA.

Lysine 34 carries the post-translational modification N6-(3,6-diaminohexanoyl)-5-hydroxylysine.

The protein belongs to the elongation factor P family. Post-translationally, may be beta-lysylated on the epsilon-amino group of Lys-34 by the combined action of EpmA and EpmB, and then hydroxylated on the C5 position of the same residue by EpmC (if this protein is present). Lysylation is critical for the stimulatory effect of EF-P on peptide-bond formation. The lysylation moiety may extend toward the peptidyltransferase center and stabilize the terminal 3-CCA end of the tRNA. Hydroxylation of the C5 position on Lys-34 may allow additional potential stabilizing hydrogen-bond interactions with the P-tRNA.

Its subcellular location is the cytoplasm. It participates in protein biosynthesis; polypeptide chain elongation. Functionally, involved in peptide bond synthesis. Alleviates ribosome stalling that occurs when 3 or more consecutive Pro residues or the sequence PPG is present in a protein, possibly by augmenting the peptidyl transferase activity of the ribosome. Modification of Lys-34 is required for alleviation. The polypeptide is Elongation factor P (Acinetobacter baumannii (strain AB307-0294)).